The sequence spans 118 residues: MARVKRGVIARKRHNKVLKQAKGYYGARKKIFRVAKQAVIKAGQYAYRDRRNKKRQFRRLWIARINAAARLNGMTYSRFISGLNKAGVEVDRKVLSDIAVHDAAAFSAIVEKAKAALA.

Belongs to the bacterial ribosomal protein bL20 family.

In terms of biological role, binds directly to 23S ribosomal RNA and is necessary for the in vitro assembly process of the 50S ribosomal subunit. It is not involved in the protein synthesizing functions of that subunit. The sequence is that of Large ribosomal subunit protein bL20 from Hydrogenovibrio crunogenus (strain DSM 25203 / XCL-2) (Thiomicrospira crunogena).